A 241-amino-acid chain; its full sequence is Phosphoribosylaminoimidazole-succinocarboxamide synthase (241 aa).

Belongs to the SAICAR synthetase family.

It carries out the reaction 5-amino-1-(5-phospho-D-ribosyl)imidazole-4-carboxylate + L-aspartate + ATP = (2S)-2-[5-amino-1-(5-phospho-beta-D-ribosyl)imidazole-4-carboxamido]succinate + ADP + phosphate + 2 H(+). Its pathway is purine metabolism; IMP biosynthesis via de novo pathway; 5-amino-1-(5-phospho-D-ribosyl)imidazole-4-carboxamide from 5-amino-1-(5-phospho-D-ribosyl)imidazole-4-carboxylate: step 1/2. The protein is Phosphoribosylaminoimidazole-succinocarboxamide synthase (purC) of Bacillus subtilis (strain 168).